A 225-amino-acid polypeptide reads, in one-letter code: MLSGQTVVSIQPVVGSPLDKTEFIVAMAVAAEQAGAKALRIEGVENVRHVSQATNVPIIGIVKRDLQDSPVRITPFVCDVDALATAGATIIAFDATDRQRPESRETIANAIKNSGCFAMADCSCFADGQWAAQIGVDIIGSTLSGYVGEIEPTEPDLELVKQFSSAGFFTMAEGRYNTPQLAAKAIENGAVAVTVGSAITRMEVVTHWFNSATQAVRQNNESISY.

Belongs to the NanE family.

It carries out the reaction an N-acyl-D-glucosamine 6-phosphate = an N-acyl-D-mannosamine 6-phosphate. It participates in amino-sugar metabolism; N-acetylneuraminate degradation; D-fructose 6-phosphate from N-acetylneuraminate: step 3/5. Functionally, converts N-acetylmannosamine-6-phosphate (ManNAc-6-P) to N-acetylglucosamine-6-phosphate (GlcNAc-6-P). The protein is Putative N-acetylmannosamine-6-phosphate 2-epimerase of Vibrio vulnificus (strain CMCP6).